Here is a 94-residue protein sequence, read N- to C-terminus: Small ribosomal subunit protein uS19 (94 aa).

The protein belongs to the universal ribosomal protein uS19 family.

Protein S19 forms a complex with S13 that binds strongly to the 16S ribosomal RNA. This chain is Small ribosomal subunit protein uS19, found in Dictyoglomus turgidum (strain DSM 6724 / Z-1310).